The chain runs to 92 residues: Small ribosomal subunit protein bS20 (92 aa).

It belongs to the bacterial ribosomal protein bS20 family.

Functionally, binds directly to 16S ribosomal RNA. The protein is Small ribosomal subunit protein bS20 of Rickettsia conorii (strain ATCC VR-613 / Malish 7).